Consider the following 45-residue polypeptide: uncharacterized protein (45 aa).

The helical transmembrane segment at 15–37 threads the bilayer; it reads EVVGTLMAVLITFALVAVVFNFI.

Its subcellular location is the membrane. This is an uncharacterized protein from Archaeoglobus fulgidus (strain ATCC 49558 / DSM 4304 / JCM 9628 / NBRC 100126 / VC-16).